Reading from the N-terminus, the 469-residue chain is MKKTLYQKLFDSHIVHEAPGEVPILYINRHLIHEVTSPQAFDGLRVAGRQVRQVNKTFGTMDHSISTQVRDVNKLTGQAKIQVLELDKNCKATGISLFDMNSKQQGIVHVMGPEQGLTLPGMTIVCGDSHTATHGAFGALAFGIGTSEVEHVLATQTLKQARAKSMKIEVRGEVAKGITAKDIILAIIGKTTMAGGTGHVVEFCGEAIRALSMEGRMTVCNMAIEMGAKAGLIAPDETTFAYLKDRPYAPKGKDWESAVEYWKTLKTDEGAEFDTVVILDAKDIAPQVTWGTNPGQVIGIDQKVPNPAEMQDPVTKASAEKALAYIGLSPETDLKDISVDQVFIGSCTNSRIEDLRAAATVMKGRKKADNVKRVLVVPGSGLVKEQAEKEGLDKIFIAAGAEWRNPGCSMCLGMNDDRLGEWERCASTSNRNFEGRQGRNGRTHLVSPAMAAAAAVFGKFVDIRYMELN.

Residues cysteine 347, cysteine 408, and cysteine 411 each contribute to the [4Fe-4S] cluster site.

It belongs to the aconitase/IPM isomerase family. LeuC type 1 subfamily. In terms of assembly, heterodimer of LeuC and LeuD. Requires [4Fe-4S] cluster as cofactor.

It carries out the reaction (2R,3S)-3-isopropylmalate = (2S)-2-isopropylmalate. It participates in amino-acid biosynthesis; L-leucine biosynthesis; L-leucine from 3-methyl-2-oxobutanoate: step 2/4. Its function is as follows. Catalyzes the isomerization between 2-isopropylmalate and 3-isopropylmalate, via the formation of 2-isopropylmaleate. This is 3-isopropylmalate dehydratase large subunit from Histophilus somni (strain 129Pt) (Haemophilus somnus).